The primary structure comprises 827 residues: MDVSLCPTKCTFWRVFLLWSIWGDYLLSVLACPANCLCSKTDINCKKPDDGNLFPLLEGQDSGSSNGNTSINITDISRNITSIHIENWKNLQTLNAVDMELYTGLQRLTIRNSGLRNIQPRAFAKNPHLRYIDLSGNRLTTLSWQLFQTLRLFDLRLERNPFNCSCDIRWIQLWQEKGEANLQSQQLHCMNLDTAVILLRNMNITQCDLPEISVSHVNLTVREGENAVITCNGSGSPLPDVDWTVADLHSINTHQTNLNWTNVHAINLTLVNVTSEDNGFLLTCIAENVVGMSNASVLLTVYYPPRILTLEEPVLHLEHCIAFAVHGNPAPTLHWLHNGQVLRETEIIHMEFYQQGEVSEGCLLFNKPTHYNNGNYTIVATNQLGSANQTIKGHFLEKPFPESTDNFVSIGDYEVSPTPPITVTHKPEEDTFGVSIAVGLAAFACVLLVVLFIMINKYGRRSKFGMKGPVAVISGEEDSASPLHHINHGITTPSSLDAGPDTVVIGMTRIPVIENPQYFRQGHNCHKPDTYVQHIKRRDIVLKRELGEGAFGKVFLAECYNLSPTNDKMLVAVKALKDPTLAARKDFQREAELLTNLQHEHIVKFYGVCGDGDPLIMVFEYMKHGDLNKFLRAHGPDAMILVDGQPRQAKGELGLSQMLHIASQIASGMVYLASQHFVHRDLATRNCLVGANLLVKIGDFGMSRDVYSTDYYRVGGHTMLPIRWMPPESIMYRKFTTESDVWSFGVILWEIFTYGKQPWFQLSNTEVIECITQGRVLERPRVCPKEVYDIMLGCWQREPQQRLNIKEIYKILHALGKATPIYLDILG.

The first 31 residues, 1 to 31 (MDVSLCPTKCTFWRVFLLWSIWGDYLLSVLA), serve as a signal peptide directing secretion. Intrachain disulfides connect Cys-32/Cys-38 and Cys-36/Cys-45. The Extracellular segment spans residues 32–430 (CPANCLCSKT…ITVTHKPEED (399 aa)). N-linked (GlcNAc...) asparagine glycosylation is found at Asn-68, Asn-72, and Asn-79. LRR repeat units lie at residues 104-125 (GLQR…AFAK) and 128-149 (HLRY…LFQT). The LRRCT domain occupies 160-209 (NPFNCSCDIRWIQLWQEKGEANLQSQQLHCMNLDTAVILLRNMNITQCDL). Asn-163 carries an N-linked (GlcNAc...) asparagine glycan. 2 cysteine pairs are disulfide-bonded: Cys-164–Cys-189 and Cys-166–Cys-207. Asn-203, Asn-218, Asn-232, Asn-259, Asn-267, Asn-272, and Asn-294 each carry an N-linked (GlcNAc...) asparagine glycan. Ig-like C2-type domains are found at residues 210-300 (PEIS…VLLT) and 319-382 (HCIA…VATN). An intrachain disulfide couples Cys-231 to Cys-284. An intrachain disulfide couples Cys-320 to Cys-362. 2 N-linked (GlcNAc...) asparagine glycosylation sites follow: Asn-375 and Asn-388. A helical membrane pass occupies residues 431-455 (TFGVSIAVGLAAFACVLLVVLFIMI). The Cytoplasmic portion of the chain corresponds to 456-827 (NKYGRRSKFG…ATPIYLDILG (372 aa)). Tyr-518 carries the phosphotyrosine; by autocatalysis modification. In terms of domain architecture, Protein kinase spans 540-812 (IVLKRELGEG…LNIKEIYKIL (273 aa)). ATP-binding positions include 546-554 (LGEGAFGKV) and Lys-574. Catalysis depends on Asp-681, which acts as the Proton acceptor. 4 positions are modified to phosphotyrosine; by autocatalysis: Tyr-707, Tyr-711, Tyr-712, and Tyr-822.

Belongs to the protein kinase superfamily. Tyr protein kinase family. Insulin receptor subfamily. In terms of assembly, exists in a dynamic equilibrium between monomeric (low affinity) and dimeric (high affinity) structures. Interacts with PTPRS. Post-translationally, ligand-mediated auto-phosphorylation.

The protein resides in the membrane. The catalysed reaction is L-tyrosyl-[protein] + ATP = O-phospho-L-tyrosyl-[protein] + ADP + H(+). Its function is as follows. Receptor tyrosine kinase involved in nervous system and probably heart development. Upon binding of its ligand NTF3/neurotrophin-3, NTRK3 autophosphorylates and activates different signaling pathways, including the phosphatidylinositol 3-kinase/AKT and the MAPK pathways, that control cell survival and differentiation. The KT and KD isoforms fail to stimulate transformation, process outgrowth or survival. Isoform KI25 exhibits tyrosine phosphorylation in the absence of ligand and is unable to mediate survival of neuronal cells. This Gallus gallus (Chicken) protein is NT-3 growth factor receptor (NTRK3).